The primary structure comprises 164 residues: Protein SprT (164 aa).

A SprT-like domain is found at 14-156 (QQAETFFKRP…LCRRCREILV (143 aa)). His69 lines the Zn(2+) pocket. Glu70 is an active-site residue. His73 is a binding site for Zn(2+).

This sequence belongs to the SprT family. Zn(2+) serves as cofactor.

The protein resides in the cytoplasm. This chain is Protein SprT, found in Pseudomonas entomophila (strain L48).